A 294-amino-acid polypeptide reads, in one-letter code: Cytidine deaminase (294 aa).

2 consecutive CMP/dCMP-type deaminase domains span residues 48 to 168 (DEDA…FGPK) and 186 to 294 (LTGD…VLLA). 89-91 (NME) is a substrate binding site. His102 contacts Zn(2+). The Proton donor role is filled by Glu104. 2 residues coordinate Zn(2+): Cys129 and Cys132.

The protein belongs to the cytidine and deoxycytidylate deaminase family. Homodimer. Zn(2+) is required as a cofactor.

The catalysed reaction is cytidine + H2O + H(+) = uridine + NH4(+). The enzyme catalyses 2'-deoxycytidine + H2O + H(+) = 2'-deoxyuridine + NH4(+). Functionally, this enzyme scavenges exogenous and endogenous cytidine and 2'-deoxycytidine for UMP synthesis. The chain is Cytidine deaminase from Escherichia coli (strain K12).